Here is a 144-residue protein sequence, read N- to C-terminus: Large ribosomal subunit protein uL13 (144 aa).

It belongs to the universal ribosomal protein uL13 family. Part of the 50S ribosomal subunit.

This protein is one of the early assembly proteins of the 50S ribosomal subunit, although it is not seen to bind rRNA by itself. It is important during the early stages of 50S assembly. The sequence is that of Large ribosomal subunit protein uL13 from Heliobacterium modesticaldum (strain ATCC 51547 / Ice1).